We begin with the raw amino-acid sequence, 506 residues long: Glutamate--tRNA ligase (506 aa).

Residues 14–24 carry the 'HIGH' region motif; that stretch reads PSPTGYLHIGG. Positions 261–265 match the 'KMSKS' region motif; it reads KLSKR. Residue K264 participates in ATP binding.

This sequence belongs to the class-I aminoacyl-tRNA synthetase family. Glutamate--tRNA ligase type 1 subfamily. Monomer.

Its subcellular location is the cytoplasm. The catalysed reaction is tRNA(Glu) + L-glutamate + ATP = L-glutamyl-tRNA(Glu) + AMP + diphosphate. Functionally, catalyzes the attachment of glutamate to tRNA(Glu) in a two-step reaction: glutamate is first activated by ATP to form Glu-AMP and then transferred to the acceptor end of tRNA(Glu). The sequence is that of Glutamate--tRNA ligase from Roseiflexus sp. (strain RS-1).